Reading from the N-terminus, the 226-residue chain is UPF0758 protein PSEEN5431 (226 aa).

An MPN domain is found at 102-224 (VMDNPLAVRR…PLSMIEHGWL (123 aa)). Positions 173, 175, and 186 each coordinate Zn(2+). Positions 173-186 (HNHPSGNCEPSQDD) match the JAMM motif motif.

The protein belongs to the UPF0758 family.

This chain is UPF0758 protein PSEEN5431, found in Pseudomonas entomophila (strain L48).